Reading from the N-terminus, the 215-residue chain is Octanoyltransferase (215 aa).

A BPL/LPL catalytic domain is found at 31-206; that stretch reads TDAPDEVWLV…QLVKHLDYAE (176 aa). Substrate is bound by residues 70 to 77, 137 to 139, and 150 to 152; these read RGGQVTYH, SLG, and GLA. C168 functions as the Acyl-thioester intermediate in the catalytic mechanism.

Belongs to the LipB family.

Its subcellular location is the cytoplasm. The catalysed reaction is octanoyl-[ACP] + L-lysyl-[protein] = N(6)-octanoyl-L-lysyl-[protein] + holo-[ACP] + H(+). Its pathway is protein modification; protein lipoylation via endogenous pathway; protein N(6)-(lipoyl)lysine from octanoyl-[acyl-carrier-protein]: step 1/2. Its function is as follows. Catalyzes the transfer of endogenously produced octanoic acid from octanoyl-acyl-carrier-protein onto the lipoyl domains of lipoate-dependent enzymes. Lipoyl-ACP can also act as a substrate although octanoyl-ACP is likely to be the physiological substrate. In Pseudomonas fluorescens (strain ATCC BAA-477 / NRRL B-23932 / Pf-5), this protein is Octanoyltransferase.